The sequence spans 421 residues: tRNA (guanine-N(7)-)-methyltransferase non-catalytic subunit TRM82 (421 aa).

3 WD repeats span residues 72 to 112, 170 to 212, and 216 to 258; these read AVYS…EDPE, GHVS…IVDK, and GHKE…SQYS.

Belongs to the WD repeat TRM82 family. Forms a heterodimer with the catalytic subunit TRM8.

It is found in the nucleus. It functions in the pathway tRNA modification; N(7)-methylguanine-tRNA biosynthesis. Its function is as follows. Required for the formation of N(7)-methylguanine at position 46 (m7G46) in tRNA. In the complex, it is required to stabilize and induce conformational changes of the catalytic subunit. In Candida glabrata (strain ATCC 2001 / BCRC 20586 / JCM 3761 / NBRC 0622 / NRRL Y-65 / CBS 138) (Yeast), this protein is tRNA (guanine-N(7)-)-methyltransferase non-catalytic subunit TRM82.